Consider the following 332-residue polypeptide: DNA-directed RNA polymerase subunit alpha (332 aa).

The interval 1 to 226 (MLIAQRPTLT…ELFGLARELN (226 aa)) is alpha N-terminal domain (alpha-NTD). The interval 243-332 (LSSELSMPIE…GYDEDESTTI (90 aa)) is alpha C-terminal domain (alpha-CTD).

This sequence belongs to the RNA polymerase alpha chain family. As to quaternary structure, homodimer. The RNAP catalytic core consists of 2 alpha, 1 beta, 1 beta' and 1 omega subunit. When a sigma factor is associated with the core the holoenzyme is formed, which can initiate transcription.

The enzyme catalyses RNA(n) + a ribonucleoside 5'-triphosphate = RNA(n+1) + diphosphate. In terms of biological role, DNA-dependent RNA polymerase catalyzes the transcription of DNA into RNA using the four ribonucleoside triphosphates as substrates. The sequence is that of DNA-directed RNA polymerase subunit alpha from Leifsonia xyli subsp. xyli (strain CTCB07).